The following is a 531-amino-acid chain: Protein MGF 505-1R (531 aa).

The protein belongs to the asfivirus MGF 505 family.

In terms of biological role, plays a role in virus cell tropism, and may be required for efficient virus replication in macrophages. This chain is Protein MGF 505-1R, found in Ornithodoros (relapsing fever ticks).